A 148-amino-acid polypeptide reads, in one-letter code: Large ribosomal subunit protein uL15 (148 aa).

Over residues 1-30 (MPSRLRKTRKLRGHVSHGHGRIGKHRKHPG) the composition is skewed to basic residues. The disordered stretch occupies residues 1–37 (MPSRLRKTRKLRGHVSHGHGRIGKHRKHPGGRGNAGG). A (3S)-3-hydroxyhistidine modification is found at H39. 2 positions are modified to N6-acetyllysine: K47 and K55. S68 is subject to Phosphoserine. Position 110 is an N6-acetyllysine (K110).

Belongs to the universal ribosomal protein uL15 family. Component of the large ribosomal subunit. In terms of processing, hydroxylated on His-39 by MINA.

It localises to the cytoplasm. In terms of biological role, component of the large ribosomal subunit. The ribosome is a large ribonucleoprotein complex responsible for the synthesis of proteins in the cell. The sequence is that of Large ribosomal subunit protein uL15 (RPL27A) from Bos taurus (Bovine).